Here is a 357-residue protein sequence, read N- to C-terminus: Probable cinnamyl alcohol dehydrogenase (357 aa).

Cysteine 47 serves as a coordination point for Zn(2+). NADP(+) is bound at residue serine 49. Residues histidine 69, glutamate 70, cysteine 100, cysteine 103, cysteine 106, cysteine 114, and cysteine 163 each coordinate Zn(2+). NADP(+) contacts are provided by residues threonine 167, 188–193, 211–216, threonine 251, glycine 275, and 298–300; these read GLGGVG, SSSDKK, and SFI.

This sequence belongs to the zinc-containing alcohol dehydrogenase family. In terms of assembly, homodimer. It depends on Zn(2+) as a cofactor.

It carries out the reaction (E)-cinnamyl alcohol + NADP(+) = (E)-cinnamaldehyde + NADPH + H(+). The enzyme catalyses (E)-coniferol + NADP(+) = (E)-coniferaldehyde + NADPH + H(+). It catalyses the reaction (E)-sinapyl alcohol + NADP(+) = (E)-sinapaldehyde + NADPH + H(+). The catalysed reaction is (E)-4-coumaroyl alcohol + NADP(+) = (E)-4-coumaraldehyde + NADPH + H(+). It carries out the reaction (E)-caffeyl alcohol + NADP(+) = (E)-caffeyl aldehyde + NADPH + H(+). It functions in the pathway aromatic compound metabolism; phenylpropanoid biosynthesis. Functionally, involved in lignin biosynthesis. Catalyzes the final step specific for the production of lignin monomers. Catalyzes the NADPH-dependent reduction of coniferaldehyde, 5-hydroxyconiferaldehyde, sinapaldehyde, 4-coumaraldehyde and caffeyl aldehyde to their respective alcohols. This Pinus taeda (Loblolly pine) protein is Probable cinnamyl alcohol dehydrogenase.